A 283-amino-acid polypeptide reads, in one-letter code: Flagellar filament 35 kDa core protein (283 aa).

The protein belongs to the bacterial flagellin family. As to quaternary structure, the flagellum consists of two outer layers around a core that contains several antigenically related polypeptides.

Its subcellular location is the periplasmic flagellum. The protein resides in the periplasm. Functionally, component of the core of the flagella. This Leptospira interrogans serogroup Icterohaemorrhagiae serovar copenhageni (strain Fiocruz L1-130) protein is Flagellar filament 35 kDa core protein (flaB).